The sequence spans 105 residues: Large ribosomal subunit protein uL24 (105 aa).

Belongs to the universal ribosomal protein uL24 family. Part of the 50S ribosomal subunit.

Its function is as follows. One of two assembly initiator proteins, it binds directly to the 5'-end of the 23S rRNA, where it nucleates assembly of the 50S subunit. Functionally, one of the proteins that surrounds the polypeptide exit tunnel on the outside of the subunit. This is Large ribosomal subunit protein uL24 from Leptothrix cholodnii (strain ATCC 51168 / LMG 8142 / SP-6) (Leptothrix discophora (strain SP-6)).